Consider the following 516-residue polypeptide: Bifunctional purine biosynthesis protein PurH (516 aa).

In terms of domain architecture, MGS-like spans 1 to 150; it reads MSDDRKQIKR…KNHPSVAVVV (150 aa).

This sequence belongs to the PurH family.

It carries out the reaction (6R)-10-formyltetrahydrofolate + 5-amino-1-(5-phospho-beta-D-ribosyl)imidazole-4-carboxamide = 5-formamido-1-(5-phospho-D-ribosyl)imidazole-4-carboxamide + (6S)-5,6,7,8-tetrahydrofolate. It catalyses the reaction IMP + H2O = 5-formamido-1-(5-phospho-D-ribosyl)imidazole-4-carboxamide. The protein operates within purine metabolism; IMP biosynthesis via de novo pathway; 5-formamido-1-(5-phospho-D-ribosyl)imidazole-4-carboxamide from 5-amino-1-(5-phospho-D-ribosyl)imidazole-4-carboxamide (10-formyl THF route): step 1/1. It participates in purine metabolism; IMP biosynthesis via de novo pathway; IMP from 5-formamido-1-(5-phospho-D-ribosyl)imidazole-4-carboxamide: step 1/1. The chain is Bifunctional purine biosynthesis protein PurH from Corynebacterium ammoniagenes (Brevibacterium ammoniagenes).